The chain runs to 269 residues: Malonyl-[acyl-carrier protein] O-methyltransferase (269 aa).

This sequence belongs to the methyltransferase superfamily.

It catalyses the reaction malonyl-[ACP] + S-adenosyl-L-methionine = malonyl-[ACP] methyl ester + S-adenosyl-L-homocysteine. It participates in cofactor biosynthesis; biotin biosynthesis. Converts the free carboxyl group of a malonyl-thioester to its methyl ester by transfer of a methyl group from S-adenosyl-L-methionine (SAM). It allows to synthesize pimeloyl-ACP via the fatty acid synthetic pathway. This chain is Malonyl-[acyl-carrier protein] O-methyltransferase, found in Bacillus cereus (strain ATCC 14579 / DSM 31 / CCUG 7414 / JCM 2152 / NBRC 15305 / NCIMB 9373 / NCTC 2599 / NRRL B-3711).